Here is a 35-residue protein sequence, read N- to C-terminus: SKDVMHQMALKFGKPIKLLQQELGADDSVVKDFLD.

Belongs to the PBP/GOBP family. Homodimer. As to expression, antenna.

In terms of biological role, this major soluble protein in olfactory sensilla of male moths might serve to solubilize the extremely hydrophobic pheromone molecules and to transport pheromone through the aqueous lymph to receptors located on olfactory cilia. The chain is Pheromone-binding protein 2 from Lymantria dispar (Gypsy moth).